The sequence spans 1099 residues: Probable inorganic carbon transporter subunit DabA (1099 aa).

The tract at residues 175 to 194 is disordered; it reads RQGRRRFATTERRTRRTRRS. Basic residues predominate over residues 176 to 194; that stretch reads QGRRRFATTERRTRRTRRS. Zn(2+) contacts are provided by cysteine 514, aspartate 516, histidine 722, and cysteine 737. The disordered stretch occupies residues 1071 to 1099; that stretch reads AGAGAAQPTRDAIELPEQASGPLPARDGQ.

It belongs to the inorganic carbon transporter (TC 9.A.2) DabA family. Forms a complex with DabB. Zn(2+) serves as cofactor.

It localises to the cell membrane. Part of an energy-coupled inorganic carbon pump. This is Probable inorganic carbon transporter subunit DabA from Parafrankia sp. (strain EAN1pec).